The sequence spans 296 residues: Thiamine-monophosphate kinase (296 aa).

Residues D32, T46, and D48 each coordinate Mg(2+). D55 lines the substrate pocket. Residues D76 and D121 each coordinate Mg(2+). ATP is bound by residues 120–121 (GD) and R144. D206 contributes to the Mg(2+) binding site. S208 contributes to the ATP binding site. D209 contributes to the Mg(2+) binding site. Y293 is a substrate binding site.

This sequence belongs to the thiamine-monophosphate kinase family.

It carries out the reaction thiamine phosphate + ATP = thiamine diphosphate + ADP. The protein operates within cofactor biosynthesis; thiamine diphosphate biosynthesis; thiamine diphosphate from thiamine phosphate: step 1/1. Functionally, catalyzes the ATP-dependent phosphorylation of thiamine-monophosphate (TMP) to form thiamine-pyrophosphate (TPP), the active form of vitamin B1. The chain is Thiamine-monophosphate kinase from Archaeoglobus fulgidus (strain ATCC 49558 / DSM 4304 / JCM 9628 / NBRC 100126 / VC-16).